The following is a 473-amino-acid chain: GTPase Der (473 aa).

2 EngA-type G domains span residues P5 to V170 and L178 to M351. GTP-binding positions include G11–S18, D58–I62, N123–D126, G184–S191, D231–V235, and N296–D299. The 85-residue stretch at F352–T436 folds into the KH-like domain. Positions P438–K473 are disordered. Over residues Q459–K473 the composition is skewed to basic residues.

The protein belongs to the TRAFAC class TrmE-Era-EngA-EngB-Septin-like GTPase superfamily. EngA (Der) GTPase family. Associates with the 50S ribosomal subunit.

Its function is as follows. GTPase that plays an essential role in the late steps of ribosome biogenesis. The polypeptide is GTPase Der (Psychrobacter sp. (strain PRwf-1)).